A 95-amino-acid polypeptide reads, in one-letter code: Alpha-defensin 20 (95 aa).

A signal peptide spans 1-19 (MKTLVLLSALVLLAFQVQA). Positions 20-58 (DPIQNTDEETNTEEQPGEEDQAVSVSFGDPEGSALHEKS) are excised as a propeptide. Positions 22–57 (IQNTDEETNTEEQPGEEDQAVSVSFGDPEGSALHEK) are disordered. Positions 25–40 (TDEETNTEEQPGEEDQ) are enriched in acidic residues. 3 disulfide bridges follow: C64/C89, C66/C81, and C71/C88.

This sequence belongs to the alpha-defensin family.

The protein resides in the secreted. Functionally, may have microbicidal activities. This chain is Alpha-defensin 20 (Defa20), found in Mus musculus (Mouse).